We begin with the raw amino-acid sequence, 419 residues long: 4-hydroxyphenylpyruvate dioxygenase (419 aa).

VOC domains are found at residues 41 to 187 (GYHH…FIQR) and 218 to 376 (AIDH…LFTK). Residues H221, H304, and E387 each contribute to the Fe cation site.

This sequence belongs to the 4HPPD family. Requires Fe cation as cofactor.

It catalyses the reaction 3-(4-hydroxyphenyl)pyruvate + O2 = homogentisate + CO2. Its pathway is amino-acid degradation; L-phenylalanine degradation; acetoacetate and fumarate from L-phenylalanine: step 3/6. This Zymoseptoria tritici (Speckled leaf blotch fungus) protein is 4-hydroxyphenylpyruvate dioxygenase (HPPD).